Here is a 299-residue protein sequence, read N- to C-terminus: Putative syntaxin-2 (299 aa).

The Cytoplasmic segment spans residues 1–270 (MRDRLNEFQS…SAMRKKICVA (270 aa)). The stretch at 112 to 146 (EKRMRQNQLELLKDNLNKLINLFNETHQDYKSRVS) forms a coiled coil. The t-SNARE coiled-coil homology domain occupies 193-255 (YEDVKKRHGE…KQGSANVKTA (63 aa)). Residues 271–291 (AILITILLILIIVAIILAVVL) traverse the membrane as a helical; Anchor for type IV membrane protein segment. At 292 to 299 (SRGNNNNK) the chain is on the extracellular side.

Belongs to the syntaxin family.

It localises to the membrane. Potentially involved in docking of synaptic vesicles at presynaptic active zones. The protein is Putative syntaxin-2 (syx-2) of Caenorhabditis elegans.